Here is a 132-residue protein sequence, read N- to C-terminus: MAKDILGEAGLHFDELNKLRVLDPEVTQQTVELKEECKDFVDKIGQFQKIVGGLIELVDQLAKEAENEKMKAIGARNLLKSIAKQREAQQQQLQALIAEKKTQLERYRVEYEALCKVEAEQNEFIDQFIFQK.

The tract at residues 70-132 (MKAIGARNLL…EFIDQFIFQK (63 aa)) is IFT57-binding. Residues 74–116 (GARNLLKSIAKQREAQQQQLQALIAEKKTQLERYRVEYEALCK) are a coiled coil.

In terms of assembly, component of the IFT complex B, at least composed of IFT20, IFT22, IFT25, IFT27, IFT46, IFT52, TRAF3IP1/IFT54, IFT57, IFT74, IFT80, IFT81, and IFT88. Interacts directly with IFT57 and KIF3B/Kinesin II subunit. Interacts with IFT88. Interacts with CEP83. Interacts with SPEF2 (via C-terminus). Interacts with CBL and CBLB. Interacts with TRIP11. Interacts with TTC21A. Interacts with SPATA1. Interacts with USH1G. Interacts with CCDC146. Interacts with CEP78; regulating IFT20 stability and localization. In terms of tissue distribution, expressed predominantly in the testis (at protein level). Expressed in kidney and retina. Expression is up-regulated during spermiogenesis.

It is found in the golgi apparatus. It localises to the cis-Golgi network. The protein resides in the cytoplasm. Its subcellular location is the cytoskeleton. The protein localises to the microtubule organizing center. It is found in the centrosome. It localises to the centriole. The protein resides in the cilium basal body. Its subcellular location is the cell projection. The protein localises to the cilium. It is found in the cytoplasmic vesicle. It localises to the secretory vesicle. The protein resides in the acrosome. Functionally, part of intraflagellar transport (IFT) particles involved in ciliary process assembly. May play a role in the trafficking of ciliary membrane proteins from the Golgi complex to the cilium. Regulates the ciliary platelet-derived growth factor receptor-alpha (PDGFRA) signaling pathway. Required for protein stability of E3 ubiquitin ligases CBL and CBLB that mediate ubiquitination and internalization of PDGFRA for proper feedback inhibition of PDGFRA signaling. Essential for male fertility. Plays an important role in spermatogenesis, particularly spermiogenesis, when germ cells form flagella. May play a role in the transport of flagellar proteins ODF2 and SPAG16 to build sperm flagella and in the removal of redundant sperm cytoplasm. Also involved in autophagy since it is required for trafficking of ATG16L and the expansion of the autophagic compartment. The protein is Intraflagellar transport protein 20 homolog (Ift20) of Mus musculus (Mouse).